Reading from the N-terminus, the 445-residue chain is 6-phosphogluconate dehydrogenase, decarboxylating (445 aa).

NADP(+)-binding positions include 1–4 (AVMG), 22–24 (NRS), 63–65 (VKA), and Asn91. Substrate-binding positions include Asn91 and 117-119 (SGG). Lys172 acts as the Proton acceptor in catalysis. 175-176 (HN) lines the substrate pocket. Glu179 functions as the Proton donor in the catalytic mechanism. 5 residues coordinate substrate: Tyr180, Lys249, Arg276, Arg434, and His440.

It belongs to the 6-phosphogluconate dehydrogenase family. In terms of assembly, homodimer.

It carries out the reaction 6-phospho-D-gluconate + NADP(+) = D-ribulose 5-phosphate + CO2 + NADPH. Its pathway is carbohydrate degradation; pentose phosphate pathway; D-ribulose 5-phosphate from D-glucose 6-phosphate (oxidative stage): step 3/3. Catalyzes the oxidative decarboxylation of 6-phosphogluconate to ribulose 5-phosphate and CO(2), with concomitant reduction of NADP to NADPH. The chain is 6-phosphogluconate dehydrogenase, decarboxylating (gnd) from Shigella dysenteriae.